We begin with the raw amino-acid sequence, 672 residues long: Leucine-rich repeat receptor-like protein kinase PXC1 (672 aa).

A signal peptide spans 1 to 21 (MAAKPLLLPLLLLLHLSITLA). The Extracellular portion of the chain corresponds to 22–269 (QNDTNALTLF…IHSHRGIKPG (248 aa)). Asn23, Asn44, and Asn101 each carry an N-linked (GlcNAc...) asparagine glycan. One copy of the LRR 1 repeat lies at 87–110 (LDQLRLLDLHDNRLNGTVSPLTNC). Lys111 is covalently cross-linked (Glycyl lysine isopeptide (Lys-Gly) (interchain with G-Cter in ubiquitin)). 4 LRR repeats span residues 112–134 (NLRLVYLAGNDLSGEIPKEISFL), 135–158 (KRMIRLDLSDNNIRGVIPREILGF), 160–181 (RVLTIRIQNNELTGRIPDFSQM), and 182–205 (KSLLELNVSFNELHGNVSDGVVKK). Residues Asn188 and Asn197 are each glycosylated (N-linked (GlcNAc...) asparagine). Positions 233-249 (ESSNTDQIVPSNPTSIP) are enriched in polar residues. Positions 233 to 254 (ESSNTDQIVPSNPTSIPHSPVS) are disordered. A helical transmembrane segment spans residues 270–290 (IIAAVIGGCVAVIVLVSFGFA). Residues 291 to 672 (FCCGRLDRNG…MSPSLATTDG (382 aa)) are Cytoplasmic-facing. The segment at 300 to 333 (GERSKSGSVETGFVGGGEGKRRSSYGEGGESDAT) is disordered. The Protein kinase domain occupies 357–645 (KASAEMLGKG…AEVVKMVEEI (289 aa)). Residues 363–371 (LGKGSLGTV) and Lys386 each bind ATP. A disordered region spans residues 650-672 (SPVGEDFDESRNSMSPSLATTDG). Residues 661–672 (NSMSPSLATTDG) are compositionally biased toward polar residues.

Belongs to the protein kinase superfamily. Ser/Thr protein kinase family. Expressed in the vascular strands of cotyledons, the shoot apex, hypocotyls, roots, leaves, stems and flowers.

Its subcellular location is the cell membrane. In terms of biological role, leucine-rich repeat receptor-like protein kinase involved in secondary cell wall formation in xylem fibers. May play a role in a regulatory network which also incorporates the TDR/PXY signaling pathway and regulates the maturation of interfascicular fiber cells. May promote the initiation of secondary cell wall deposition during the procedure of cell expansion. The protein is Leucine-rich repeat receptor-like protein kinase PXC1 of Arabidopsis thaliana (Mouse-ear cress).